Consider the following 1348-residue polypeptide: Phosphoribosylformylglycinamidine synthase (1348 aa).

Residues 300–311 (GAATGAGGEIRD) and A701 each bind ATP. Residues D702, E741, N745, and D941 each contribute to the Mg(2+) site. An ATP-binding site is contributed by S943. A Glutamine amidotransferase type-1 domain is found at 1099-1348 (VAILREQGVN…MFRNARVWCG (250 aa)). The active-site Nucleophile is the C1192. Residues H1313 and E1315 contribute to the active site.

The protein in the N-terminal section; belongs to the FGAMS family. As to quaternary structure, monomer.

Its subcellular location is the cytoplasm. It carries out the reaction N(2)-formyl-N(1)-(5-phospho-beta-D-ribosyl)glycinamide + L-glutamine + ATP + H2O = 2-formamido-N(1)-(5-O-phospho-beta-D-ribosyl)acetamidine + L-glutamate + ADP + phosphate + H(+). It participates in purine metabolism; IMP biosynthesis via de novo pathway; 5-amino-1-(5-phospho-D-ribosyl)imidazole from N(2)-formyl-N(1)-(5-phospho-D-ribosyl)glycinamide: step 1/2. Its function is as follows. Phosphoribosylformylglycinamidine synthase involved in the purines biosynthetic pathway. Catalyzes the ATP-dependent conversion of formylglycinamide ribonucleotide (FGAR) and glutamine to yield formylglycinamidine ribonucleotide (FGAM) and glutamate. The protein is Phosphoribosylformylglycinamidine synthase of Xanthomonas axonopodis pv. citri (strain 306).